A 282-amino-acid chain; its full sequence is Protoheme IX farnesyltransferase (282 aa).

The next 9 membrane-spanning stretches (helical) occupy residues 13–33 (VAGMVALSCVFGYLLAAGAAG), 36–56 (MVTSAAGTFLLTCACSVFNQI), 74–96 (ASGRLPTTAARAVGMAALLPALI), 101–120 (AGGVRLVLLSAAVLALYNGV), 129–149 (AFSLLAGAVPGALPPVFGWLA), 156–176 (SPEIALLFIVYYLWQVPHFWL), 207–227 (LWYASYMVALLLLPVFPFIAE), 232–252 (IAVCLAGITGLAASGYLLASP), and 261–281 (VSMLFVMLLLVVDRLVTSGII).

Belongs to the UbiA prenyltransferase family. Protoheme IX farnesyltransferase subfamily.

It localises to the cell inner membrane. It carries out the reaction heme b + (2E,6E)-farnesyl diphosphate + H2O = Fe(II)-heme o + diphosphate. It participates in porphyrin-containing compound metabolism; heme O biosynthesis; heme O from protoheme: step 1/1. In terms of biological role, converts heme B (protoheme IX) to heme O by substitution of the vinyl group on carbon 2 of heme B porphyrin ring with a hydroxyethyl farnesyl side group. The chain is Protoheme IX farnesyltransferase from Oleidesulfovibrio alaskensis (strain ATCC BAA-1058 / DSM 17464 / G20) (Desulfovibrio alaskensis).